A 180-amino-acid polypeptide reads, in one-letter code: Large ribosomal subunit protein uL5 (180 aa).

It belongs to the universal ribosomal protein uL5 family. In terms of assembly, part of the 50S ribosomal subunit; part of the 5S rRNA/L5/L18/L25 subcomplex. Contacts the 5S rRNA and the P site tRNA. Forms a bridge to the 30S subunit in the 70S ribosome.

Its function is as follows. This is one of the proteins that bind and probably mediate the attachment of the 5S RNA into the large ribosomal subunit, where it forms part of the central protuberance. In the 70S ribosome it contacts protein S13 of the 30S subunit (bridge B1b), connecting the 2 subunits; this bridge is implicated in subunit movement. Contacts the P site tRNA; the 5S rRNA and some of its associated proteins might help stabilize positioning of ribosome-bound tRNAs. The chain is Large ribosomal subunit protein uL5 from Chlamydia pneumoniae (Chlamydophila pneumoniae).